A 295-amino-acid chain; its full sequence is Acetylglutamate kinase (295 aa).

Residues 66–67, Arg88, and Asn193 contribute to the substrate site; that span reads GG.

The protein belongs to the acetylglutamate kinase family. ArgB subfamily.

The protein resides in the cytoplasm. The enzyme catalyses N-acetyl-L-glutamate + ATP = N-acetyl-L-glutamyl 5-phosphate + ADP. It functions in the pathway amino-acid biosynthesis; L-arginine biosynthesis; N(2)-acetyl-L-ornithine from L-glutamate: step 2/4. Its function is as follows. Catalyzes the ATP-dependent phosphorylation of N-acetyl-L-glutamate. This chain is Acetylglutamate kinase, found in Rhizobium etli (strain ATCC 51251 / DSM 11541 / JCM 21823 / NBRC 15573 / CFN 42).